Consider the following 375-residue polypeptide: MSKRDYYEVLGVNRDAGDDEIKKAYRKLAMKYHPDRNPDSKEAEEKFKEAKEAYEVLSDAQKKGAYDRYGHAGVDPSMGGGGGGQGFEGFADAFGDIFGDLFGGRGGGGGRSNVYRGADLRYNLEISLEEAARGAEKTIRIPTVEECGTCHGSGAKPGTQPKTCPTCGGAGQVRIQQGFFSIQQTCPKCHGTGRIIPDPCGDCGGAGRVKKQKTLEVKIPAGIDEGMRLRHSGHGEPGVNGGPPGDLYVEIHIRQHPVFERDHDDLHCEMPISFATAALGGEIEIPTLEGMARIKIPAETQSGKVFRLRGKGIKNVRSHTHGDLMCHVVVETPVNLTERQKELLREFEEVSKGDAERHNPKAKSWMDKVRDFFAT.

A J domain is found at 5-70 (DYYEVLGVNR…QKKGAYDRYG (66 aa)). Residues 134 to 212 (GAEKTIRIPT…CGGAGRVKKQ (79 aa)) form a CR-type zinc finger. Positions 147, 150, 164, 167, 186, 189, 200, and 203 each coordinate Zn(2+). 4 CXXCXGXG motif repeats span residues 147–154 (CGTCHGSG), 164–171 (CPTCGGAG), 186–193 (CPKCHGTG), and 200–207 (CGDCGGAG).

Belongs to the DnaJ family. As to quaternary structure, homodimer. Requires Zn(2+) as cofactor.

It is found in the cytoplasm. In terms of biological role, participates actively in the response to hyperosmotic and heat shock by preventing the aggregation of stress-denatured proteins and by disaggregating proteins, also in an autonomous, DnaK-independent fashion. Unfolded proteins bind initially to DnaJ; upon interaction with the DnaJ-bound protein, DnaK hydrolyzes its bound ATP, resulting in the formation of a stable complex. GrpE releases ADP from DnaK; ATP binding to DnaK triggers the release of the substrate protein, thus completing the reaction cycle. Several rounds of ATP-dependent interactions between DnaJ, DnaK and GrpE are required for fully efficient folding. Also involved, together with DnaK and GrpE, in the DNA replication of plasmids through activation of initiation proteins. The sequence is that of Chaperone protein DnaJ from Azoarcus sp. (strain BH72).